Here is a 695-residue protein sequence, read N- to C-terminus: Elongation factor G 1 (695 aa).

In terms of domain architecture, tr-type G spans 6–284 (KKVRNIGISA…VTRYLPCPAD (279 aa)). GTP-binding positions include 15-22 (AHIDSGKT), 82-86 (DTPGH), and 136-139 (NKCD).

This sequence belongs to the TRAFAC class translation factor GTPase superfamily. Classic translation factor GTPase family. EF-G/EF-2 subfamily.

The protein resides in the cytoplasm. Catalyzes the GTP-dependent ribosomal translocation step during translation elongation. During this step, the ribosome changes from the pre-translocational (PRE) to the post-translocational (POST) state as the newly formed A-site-bound peptidyl-tRNA and P-site-bound deacylated tRNA move to the P and E sites, respectively. Catalyzes the coordinated movement of the two tRNA molecules, the mRNA and conformational changes in the ribosome. The protein is Elongation factor G 1 of Syntrophus aciditrophicus (strain SB).